We begin with the raw amino-acid sequence, 96 residues long: Co-chaperonin GroES (96 aa).

This sequence belongs to the GroES chaperonin family. As to quaternary structure, heptamer of 7 subunits arranged in a ring. Interacts with the chaperonin GroEL.

The protein resides in the cytoplasm. Functionally, together with the chaperonin GroEL, plays an essential role in assisting protein folding. The GroEL-GroES system forms a nano-cage that allows encapsulation of the non-native substrate proteins and provides a physical environment optimized to promote and accelerate protein folding. GroES binds to the apical surface of the GroEL ring, thereby capping the opening of the GroEL channel. In Haemophilus influenzae (strain PittGG), this protein is Co-chaperonin GroES.